Consider the following 211-residue polypeptide: Thiamine-phosphate synthase (211 aa).

Residues 39-41 (QLR) and Asn-71 each bind 4-amino-2-methyl-5-(diphosphooxymethyl)pyrimidine. Mg(2+) contacts are provided by Asp-72 and Asp-91. Ser-110 provides a ligand contact to 4-amino-2-methyl-5-(diphosphooxymethyl)pyrimidine. 136 to 138 (TGT) lines the 2-[(2R,5Z)-2-carboxy-4-methylthiazol-5(2H)-ylidene]ethyl phosphate pocket. Position 139 (Lys-139) interacts with 4-amino-2-methyl-5-(diphosphooxymethyl)pyrimidine. Residues Gly-167 and 187 to 188 (VS) each bind 2-[(2R,5Z)-2-carboxy-4-methylthiazol-5(2H)-ylidene]ethyl phosphate.

This sequence belongs to the thiamine-phosphate synthase family. Mg(2+) serves as cofactor.

The catalysed reaction is 2-[(2R,5Z)-2-carboxy-4-methylthiazol-5(2H)-ylidene]ethyl phosphate + 4-amino-2-methyl-5-(diphosphooxymethyl)pyrimidine + 2 H(+) = thiamine phosphate + CO2 + diphosphate. The enzyme catalyses 2-(2-carboxy-4-methylthiazol-5-yl)ethyl phosphate + 4-amino-2-methyl-5-(diphosphooxymethyl)pyrimidine + 2 H(+) = thiamine phosphate + CO2 + diphosphate. It carries out the reaction 4-methyl-5-(2-phosphooxyethyl)-thiazole + 4-amino-2-methyl-5-(diphosphooxymethyl)pyrimidine + H(+) = thiamine phosphate + diphosphate. It functions in the pathway cofactor biosynthesis; thiamine diphosphate biosynthesis; thiamine phosphate from 4-amino-2-methyl-5-diphosphomethylpyrimidine and 4-methyl-5-(2-phosphoethyl)-thiazole: step 1/1. Condenses 4-methyl-5-(beta-hydroxyethyl)thiazole monophosphate (THZ-P) and 2-methyl-4-amino-5-hydroxymethyl pyrimidine pyrophosphate (HMP-PP) to form thiamine monophosphate (TMP). This Xanthobacter autotrophicus (strain ATCC BAA-1158 / Py2) protein is Thiamine-phosphate synthase.